The primary structure comprises 218 residues: Adenylate kinase (218 aa).

10–15 (GAGKGT) is a binding site for ATP. The interval 30–59 (STGDMLRAAVKAATPLGLAAKKIMDEGGLV) is NMP. Residues Thr-31, Arg-36, 57 to 59 (GLV), 85 to 88 (GFPR), and Gln-92 contribute to the AMP site. An LID region spans residues 122-159 (GRRVHLASGRTYHVTFNPPAVPDKDDLTGEPLVQRNDD). Residues Arg-123 and 132–133 (TY) contribute to the ATP site. AMP contacts are provided by Arg-156 and Arg-167. Gly-203 lines the ATP pocket.

This sequence belongs to the adenylate kinase family. As to quaternary structure, monomer.

The protein localises to the cytoplasm. The catalysed reaction is AMP + ATP = 2 ADP. Its pathway is purine metabolism; AMP biosynthesis via salvage pathway; AMP from ADP: step 1/1. Catalyzes the reversible transfer of the terminal phosphate group between ATP and AMP. Plays an important role in cellular energy homeostasis and in adenine nucleotide metabolism. The sequence is that of Adenylate kinase from Chlorobaculum tepidum (strain ATCC 49652 / DSM 12025 / NBRC 103806 / TLS) (Chlorobium tepidum).